The sequence spans 78 residues: MSDTAERVKKIVIEHLGVDADKVTEQASFIDDLGADSLDTVELVMAFEEEFGVEIPDDAAETILTVGDAVKYIDKASA.

In terms of domain architecture, Carrier spans 2-77; the sequence is SDTAERVKKI…DAVKYIDKAS (76 aa). Ser-37 bears the O-(pantetheine 4'-phosphoryl)serine mark.

This sequence belongs to the acyl carrier protein (ACP) family. Post-translationally, 4'-phosphopantetheine is transferred from CoA to a specific serine of apo-ACP by AcpS. This modification is essential for activity because fatty acids are bound in thioester linkage to the sulfhydryl of the prosthetic group.

It localises to the cytoplasm. It participates in lipid metabolism; fatty acid biosynthesis. Carrier of the growing fatty acid chain in fatty acid biosynthesis. The protein is Acyl carrier protein AcpP of Mesorhizobium japonicum (strain LMG 29417 / CECT 9101 / MAFF 303099) (Mesorhizobium loti (strain MAFF 303099)).